A 541-amino-acid chain; its full sequence is 2-succinyl-5-enolpyruvyl-6-hydroxy-3-cyclohexene-1-carboxylate synthase (541 aa).

The protein belongs to the TPP enzyme family. MenD subfamily. As to quaternary structure, homodimer. Mg(2+) is required as a cofactor. Requires Mn(2+) as cofactor. Thiamine diphosphate serves as cofactor.

The catalysed reaction is isochorismate + 2-oxoglutarate + H(+) = 5-enolpyruvoyl-6-hydroxy-2-succinyl-cyclohex-3-ene-1-carboxylate + CO2. Its pathway is quinol/quinone metabolism; 1,4-dihydroxy-2-naphthoate biosynthesis; 1,4-dihydroxy-2-naphthoate from chorismate: step 2/7. The protein operates within quinol/quinone metabolism; menaquinone biosynthesis. Catalyzes the thiamine diphosphate-dependent decarboxylation of 2-oxoglutarate and the subsequent addition of the resulting succinic semialdehyde-thiamine pyrophosphate anion to isochorismate to yield 2-succinyl-5-enolpyruvyl-6-hydroxy-3-cyclohexene-1-carboxylate (SEPHCHC). This is 2-succinyl-5-enolpyruvyl-6-hydroxy-3-cyclohexene-1-carboxylate synthase from Leuconostoc mesenteroides subsp. mesenteroides (strain ATCC 8293 / DSM 20343 / BCRC 11652 / CCM 1803 / JCM 6124 / NCDO 523 / NBRC 100496 / NCIMB 8023 / NCTC 12954 / NRRL B-1118 / 37Y).